The primary structure comprises 245 residues: OCIA domain-containing protein 1 (245 aa).

The OCIA domain maps to 1–112 (MNGRADFREP…KKLENSPLGE (112 aa)). Phosphoserine is present on residues serine 108, serine 116, serine 123, and serine 191. 2 disordered regions span residues 111–141 (GEAL…VSGQ) and 169–245 (NESA…TWDE). 2 stretches are compositionally biased toward basic and acidic residues: residues 190–210 (ESPK…RESY) and 224–238 (PMHE…KVNK).

Belongs to the OCIAD1 family. Interacts with OCIAD2. Interacts with STAT3. In terms of tissue distribution, isoform 1 is highly expressed in many tissues, including testis, brain, placenta, ovary, prostate and mammary gland. Isoform 2 expression is restricted to the central nervous system including brain, cerebellum and spinal cord.

It localises to the endosome. Its function is as follows. Maintains stem cell potency. Increases STAT3 phosphorylation and controls ERK phosphorylation. May act as a scaffold, increasing STAT3 recruitment onto endosomes. Involved in integrin-mediated cancer cell adhesion and colony formation in ovarian cancer. The polypeptide is OCIA domain-containing protein 1 (Homo sapiens (Human)).